Reading from the N-terminus, the 578-residue chain is Triokinase/FMN cyclase (578 aa).

The region spanning 9–336 (SVEGCAGDAL…IDAETNAKAW (328 aa)) is the DhaK domain. Dihydroxyacetone-binding positions include 56-59 (GSGH), Lys109, and Asp114. Catalysis depends on His221, which acts as the Tele-hemiaminal-histidine intermediate. Positions 372-571 (KQMTLVLDRI…AAAIFRAILE (200 aa)) constitute a DhaL domain. ATP is bound by residues 401 to 404 (DGDC), 446 to 447 (SS), Gly486, and 494 to 495 (TM). Phosphoserine occurs at positions 511 and 545. 556-558 (DPG) contacts ATP.

This sequence belongs to the dihydroxyacetone kinase (DAK) family. Homodimer. Interacts with IFIH1 (via the CARD domains), the interaction is inhibited by viral infection. It depends on Mg(2+) as a cofactor. The cofactor is Mn(2+). Co(2+) serves as cofactor.

It catalyses the reaction dihydroxyacetone + ATP = dihydroxyacetone phosphate + ADP + H(+). It carries out the reaction D-glyceraldehyde + ATP = D-glyceraldehyde 3-phosphate + ADP + H(+). The enzyme catalyses FAD = riboflavin cyclic-4',5'-phosphate + AMP + H(+). With respect to regulation, each activity is inhibited by the substrate(s) of the other. Its function is as follows. Catalyzes both the phosphorylation of dihydroxyacetone and of glyceraldehyde, and the splitting of ribonucleoside diphosphate-X compounds among which FAD is the best substrate. Represses IFIH1-mediated cellular antiviral response. This chain is Triokinase/FMN cyclase (Tkfc), found in Rattus norvegicus (Rat).